The primary structure comprises 187 residues: Endoribonuclease YbeY (187 aa).

Zn(2+) is bound by residues His-151, His-155, and His-161.

The protein belongs to the endoribonuclease YbeY family. Zn(2+) serves as cofactor.

The protein localises to the cytoplasm. Its function is as follows. Single strand-specific metallo-endoribonuclease involved in late-stage 70S ribosome quality control and in maturation of the 3' terminus of the 16S rRNA. The chain is Endoribonuclease YbeY from Prochlorococcus marinus (strain MIT 9313).